We begin with the raw amino-acid sequence, 161 residues long: RNA pyrophosphohydrolase (161 aa).

In terms of domain architecture, Nudix hydrolase spans 12–154 (PYRPGVGMMI…KRKLYQAVVK (143 aa)). The Nudix box signature appears at 46 to 67 (GGIVPGETPSIAAMREMLEEIG).

The protein belongs to the Nudix hydrolase family. RppH subfamily. A divalent metal cation is required as a cofactor.

In terms of biological role, accelerates the degradation of transcripts by removing pyrophosphate from the 5'-end of triphosphorylated RNA, leading to a more labile monophosphorylated state that can stimulate subsequent ribonuclease cleavage. The chain is RNA pyrophosphohydrolase from Rickettsia africae (strain ESF-5).